A 295-amino-acid chain; its full sequence is Bifunctional protein FolD (295 aa).

NADP(+) is bound by residues 166 to 168 (GRS), serine 195, and isoleucine 236.

Belongs to the tetrahydrofolate dehydrogenase/cyclohydrolase family. Homodimer.

The enzyme catalyses (6R)-5,10-methylene-5,6,7,8-tetrahydrofolate + NADP(+) = (6R)-5,10-methenyltetrahydrofolate + NADPH. It carries out the reaction (6R)-5,10-methenyltetrahydrofolate + H2O = (6R)-10-formyltetrahydrofolate + H(+). The protein operates within one-carbon metabolism; tetrahydrofolate interconversion. Catalyzes the oxidation of 5,10-methylenetetrahydrofolate to 5,10-methenyltetrahydrofolate and then the hydrolysis of 5,10-methenyltetrahydrofolate to 10-formyltetrahydrofolate. In Pelodictyon phaeoclathratiforme (strain DSM 5477 / BU-1), this protein is Bifunctional protein FolD.